The chain runs to 142 residues: Large ribosomal subunit protein uL13 (142 aa).

The protein belongs to the universal ribosomal protein uL13 family. As to quaternary structure, part of the 50S ribosomal subunit.

This protein is one of the early assembly proteins of the 50S ribosomal subunit, although it is not seen to bind rRNA by itself. It is important during the early stages of 50S assembly. The polypeptide is Large ribosomal subunit protein uL13 (Yersinia enterocolitica serotype O:8 / biotype 1B (strain NCTC 13174 / 8081)).